A 514-amino-acid chain; its full sequence is MYSQRFGIVQREVKGPTPKVVIVRAKPPKGQGAEHHLQRIQHSHQKHHAILASIKSIERDRLKTEWDQHNDCKFVDSLVKARVKDAMQGFIINTEERRNKLRELLASEENEYFTEMQLKEETIEEKKDRMRDKIRLLREKKEKERQDFVAEKLDQQFRERCQELRAELFCIHQKAVCEERKAQIAFNEELKRQKVVEEQMFSKLWEEDRLAKERREAKEERRQKELVENTRLGLNAQVTSIQAQRQAAQRLKEEEALLVENENAQVKLENEQDKLKKQKTKQEIRAALQKALQEKMERMQQEYREEQDLNMKLMQNALQSLQEETDKKKQKKEDMRREQKIYYQYLAQRHEEEKAQEKELDRMLEKEKEKKFAEKDKELRLEKEARKQLLNEVMCTRKLQVQEKLQRKAKEQEERTMEQERINEGLKELNCEERENFIRRCSLAQEYRKQLQMQICSQQQAREAEEEEERREFEAGIAAEKSFQDKIQGILSTHQVVPRNIHPMRRACSTKLPP.

Positions 207-429 (EDRLAKERRE…ERINEGLKEL (223 aa)) form a coiled coil.

The protein belongs to the CFAP53 family. Microtubule inner protein component of sperm flagellar doublet microtubules. Interacts with PIERCE1 and PIERCE2; the interactions link outer dynein arms docking complex (ODA-DC) to the internal microtubule inner proteins (MIP) in cilium axoneme. Interacts with CCDC38. Interacts with CCDC42 and IFT88. Interacts with centriolar satellite proteins PIBF1/CEP90 and PCM1. Interacts with dyneins DNAIC1, DNAIC2 AND DNAH11 and with ODA-DC component ODAD4/TTC25. Expressed in trachea multiciliated cells.

It localises to the cytoplasm. Its subcellular location is the cytoskeleton. It is found in the cilium axoneme. The protein resides in the flagellum axoneme. The protein localises to the microtubule organizing center. It localises to the centrosome. Its subcellular location is the centriolar satellite. It is found in the spindle pole. Its function is as follows. Microtubule inner protein (MIP) part of the dynein-decorated doublet microtubules (DMTs) in cilia axoneme, which is required for motile cilia beating. Regulates motility patterns of both 9+0 and 9+2 motile cilia through differential localization and recruitment of axonemal dynein components. Required for centriolar satellite integrity and non-motile cilium assembly. Required for motile cilium formation. Through its role in beating of primary cilia, involved in the establishment of organ laterality during embryogenesis. Required for sperm flagellum biogenesis and is essential for male fertility. This chain is Cilia- and flagella-associated protein 53 (CFAP53), found in Bos taurus (Bovine).